The following is a 103-amino-acid chain: Ig lambda chain C region (103 aa).

Residues 6-99 (PTITLFPPSK…NGTSITKTLK (94 aa)) form the Ig-like domain. A disulfide bridge connects residues Cys28 and Cys85.

The chain is Ig lambda chain C region from Gallus gallus (Chicken).